Consider the following 1296-residue polypeptide: Clustered mitochondria protein homolog (1296 aa).

Residues 1–31 (MTLMNGDGAHEHQAEAEPKQNGHEMGDQTEE) are disordered. Residues 8 to 26 (GAHEHQAEAEPKQNGHEMG) are compositionally biased toward basic and acidic residues. The Clu domain maps to 333–575 (RAEDAYTSRL…RTFPPDLNFL (243 aa)). A coiled-coil region spans residues 662 to 689 (LDGEAQLKQLEETMAAHKETVDTRSKEV). TPR repeat units lie at residues 970–1003 (AFHF…FNNV), 1012–1045 (CACL…SERI), 1096–1129 (ALLD…NSKY), and 1138–1171 (ALSH…YKNQ). A coiled-coil region spans residues 1242 to 1274 (QKDLEHLKAEVQRRQQLQEAIKGAENHEAKTKE). Positions 1261–1296 (AIKGAENHEAKTKEPEMSETSDSNINAASVAPESSD) are disordered. The span at 1263–1276 (KGAENHEAKTKEPE) shows a compositional bias: basic and acidic residues. A compositionally biased stretch (polar residues) spans 1278-1296 (SETSDSNINAASVAPESSD).

Belongs to the CLU family.

It is found in the cytoplasm. It localises to the cytoplasmic granule. In terms of biological role, mRNA-binding protein involved in proper cytoplasmic distribution of mitochondria. Specifically binds mRNAs of nuclear-encoded mitochondrial proteins in the cytoplasm and regulates transport or translation of these transcripts close to mitochondria, playing a role in mitochondrial biogenesis. In Xenopus tropicalis (Western clawed frog), this protein is Clustered mitochondria protein homolog.